The primary structure comprises 188 residues: Protein GrpE (188 aa).

Positions 1 to 22 are disordered; the sequence is MADEQTLDTQNLDANQAPEASG.

The protein belongs to the GrpE family. Homodimer.

Its subcellular location is the cytoplasm. Functionally, participates actively in the response to hyperosmotic and heat shock by preventing the aggregation of stress-denatured proteins, in association with DnaK and GrpE. It is the nucleotide exchange factor for DnaK and may function as a thermosensor. Unfolded proteins bind initially to DnaJ; upon interaction with the DnaJ-bound protein, DnaK hydrolyzes its bound ATP, resulting in the formation of a stable complex. GrpE releases ADP from DnaK; ATP binding to DnaK triggers the release of the substrate protein, thus completing the reaction cycle. Several rounds of ATP-dependent interactions between DnaJ, DnaK and GrpE are required for fully efficient folding. In Pseudomonas fluorescens (strain ATCC BAA-477 / NRRL B-23932 / Pf-5), this protein is Protein GrpE.